The primary structure comprises 314 residues: RNA 2',3'-cyclic phosphodiesterase (314 aa).

Residue histidine 43 is the Proton donor of the active site. 2 short sequence motifs (HXTX) span residues 43 to 46 (HITL) and 129 to 132 (HITI). Histidine 129 functions as the Proton acceptor in the catalytic mechanism.

Belongs to the 2H phosphoesterase superfamily. ThpR family.

It carries out the reaction a 3'-end 2',3'-cyclophospho-ribonucleotide-RNA + H2O = a 3'-end 2'-phospho-ribonucleotide-RNA + H(+). In terms of biological role, hydrolyzes RNA 2',3'-cyclic phosphodiester to an RNA 2'-phosphomonoester. The chain is RNA 2',3'-cyclic phosphodiesterase from Geobacillus stearothermophilus (Bacillus stearothermophilus).